We begin with the raw amino-acid sequence, 463 residues long: uncharacterized protein (463 aa).

A run of 6 helical transmembrane segments spans residues Ile3–Val23, Val88–Ala108, Ala112–Leu132, Phe216–Trp236, Leu245–Ile265, and Leu276–Val296. Positions Val303 to Ser322 are disordered. The segment covering Gly306 to Ala316 has biased composition (pro residues). 2 helical membrane passes run Val323–Gly343 and Ala419–Val439.

It belongs to the mycobacterial PPE family.

It localises to the cell membrane. This is an uncharacterized protein from Mycobacterium tuberculosis (strain CDC 1551 / Oshkosh).